A 1173-amino-acid chain; its full sequence is Thrombospondin-1 (1173 aa).

A signal peptide spans 1 to 18 (MKGIFLLLMLVMPQTHQA). Positions 22–224 (GNDDNSVFDL…LQNVRFVFGT (203 aa)) constitute a Laminin G-like domain. A heparin-binding region spans residues 50–98 (HLVKGPDPSSPAYRIEDADLIPPLPEDKFQDLLDAIRADRGFILLATLR). N-linked (GlcNAc...) asparagine glycosylation is found at Asn155 and Asn158. A disulfide bridge links Cys174 with Cys235. Residues Asn250 and Asn363 are each glycosylated (N-linked (GlcNAc...) asparagine). The 58-residue stretch at 319 to 376 (GVCLHNGVLHKNRDEWTVDSCTECTCQNSATICRKVSCPLMPCTNATIPDGECCPRCW) folds into the VWFC domain. TSP type-1 domains are found at residues 382–432 (DDDW…QDCD), 438–493 (DGGW…DPCP), and 495–550 (NGQW…QDCP). Disulfide bonds link Cys394–Cys426, Cys398–Cys431, Cys409–Cys416, Cys450–Cys487, Cys454–Cys492, Cys465–Cys477, Cys507–Cys544, Cys511–Cys549, Cys522–Cys534, Cys554–Cys565, Cys559–Cys575, Cys578–Cys589, Cys595–Cys611, Cys602–Cys620, Cys623–Cys647, Cys653–Cys666, Cys660–Cys679, and Cys681–Cys692. The EGF-like 1 domain maps to 550-590 (PIDGCLSNPCFAGVKCTSFIDGSWKCGSCPPGYRGNGITCK). The region spanning 649-693 (PRNPCADGTHDCHKNARCIYLGHYSDPMFRCECRPGYAGNGIICG) is the EGF-like 2 domain. TSP type-3 repeat units lie at residues 694–729 (EDTDLDGWPNENLTCVDNATYHCLKDNCPNLPNSGQ), 730–765 (EDYDKDGMGDACDKDDDNDGILDDRDNCQFVYNPAQ), 766–788 (YDYDRDDVGDRCDNCPYNHNPDQ), 789–824 (ADTDRNGEGDACSVDIDGDGILNERDNCAYVYNVDQ), 825–847 (KDTDKDGVGDQCDNCPLEHNPEQ), 848–885 (TDSDSDLIGDKCDNNQDIDEDGHQNNLDNCPYIPNANQ), 886–921 (ADHDKDGKGDACDHDDDNDGVPDDKDNCRLVPNPDQ), and 922–957 (TDTNGDGRGDACQYDFDDDSIPDAEDVCPENVEIST). Residues Asn705 and Asn711 are each glycosylated (N-linked (GlcNAc...) asparagine). Intrachain disulfides connect Cys708–Cys716, Cys721–Cys741, Cys757–Cys777, Cys780–Cys800, Cys816–Cys836, Cys839–Cys859, Cys877–Cys897, Cys913–Cys933, and Cys949–Cys1170. The interval 838-935 (NCPLEHNPEQ…GDGRGDACQY (98 aa)) is disordered. Over residues 886–897 (ADHDKDGKGDAC) the composition is skewed to basic and acidic residues. A Cell attachment site motif is present at residues 929 to 931 (RGD). The 213-residue stretch at 961–1173 (RKFQMVPLDP…SDLKYECRDS (213 aa)) folds into the TSP C-terminal domain. Asn1070 carries an N-linked (GlcNAc...) asparagine glycan.

Belongs to the thrombospondin family. In terms of assembly, homotrimer; disulfide-linked.

The protein resides in the secreted. Its subcellular location is the cell surface. It is found in the extracellular space. The protein localises to the extracellular matrix. It localises to the endoplasmic reticulum. The protein resides in the sarcoplasmic reticulum. Adhesive glycoprotein that mediates cell-to-cell and cell-to-matrix interactions. Can bind to fibrinogen, fibronectin, laminin, type V collagen and integrins alpha-V/beta-1, alpha-V/beta-3 and alpha-IIb/beta-3. May play a role in ER stress response. In Xenopus laevis (African clawed frog), this protein is Thrombospondin-1 (thbs1).